Reading from the N-terminus, the 330-residue chain is D-lactate dehydrogenase (330 aa).

NAD(+) is bound by residues 156–157 (RI), Asp176, 206–207 (VP), 233–235 (AAR), and Asp259. Arg235 is an active-site residue. The active site involves Glu264. Catalysis depends on His296, which acts as the Proton donor.

The protein belongs to the D-isomer specific 2-hydroxyacid dehydrogenase family.

It catalyses the reaction (R)-lactate + NAD(+) = pyruvate + NADH + H(+). This is D-lactate dehydrogenase (ldhD) from Staphylococcus aureus.